The primary structure comprises 65 residues: Large ribosomal subunit protein bL35 (65 aa).

The segment covering 1-16 (MPKQKTHRASAKRFKR) has biased composition (basic residues). The disordered stretch occupies residues 1–20 (MPKQKTHRASAKRFKRTGSG).

Belongs to the bacterial ribosomal protein bL35 family.

This is Large ribosomal subunit protein bL35 from Streptococcus pyogenes serotype M1.